A 379-amino-acid chain; its full sequence is UDP-N-acetylglucosamine--N-acetylmuramyl-(pentapeptide) pyrophosphoryl-undecaprenol N-acetylglucosamine transferase (379 aa).

UDP-N-acetyl-alpha-D-glucosamine-binding positions include T17–G19, N128, R169, S197, and Q298.

It belongs to the glycosyltransferase 28 family. MurG subfamily.

The protein resides in the cell inner membrane. The catalysed reaction is di-trans,octa-cis-undecaprenyl diphospho-N-acetyl-alpha-D-muramoyl-L-alanyl-D-glutamyl-meso-2,6-diaminopimeloyl-D-alanyl-D-alanine + UDP-N-acetyl-alpha-D-glucosamine = di-trans,octa-cis-undecaprenyl diphospho-[N-acetyl-alpha-D-glucosaminyl-(1-&gt;4)]-N-acetyl-alpha-D-muramoyl-L-alanyl-D-glutamyl-meso-2,6-diaminopimeloyl-D-alanyl-D-alanine + UDP + H(+). Its pathway is cell wall biogenesis; peptidoglycan biosynthesis. Cell wall formation. Catalyzes the transfer of a GlcNAc subunit on undecaprenyl-pyrophosphoryl-MurNAc-pentapeptide (lipid intermediate I) to form undecaprenyl-pyrophosphoryl-MurNAc-(pentapeptide)GlcNAc (lipid intermediate II). The sequence is that of UDP-N-acetylglucosamine--N-acetylmuramyl-(pentapeptide) pyrophosphoryl-undecaprenol N-acetylglucosamine transferase from Brucella suis biovar 1 (strain 1330).